The chain runs to 456 residues: Bifunctional protein GlmU (456 aa).

Residues 1-229 (MSTSPLSVVI…LSEVEGVNNR (229 aa)) are pyrophosphorylase. UDP-N-acetyl-alpha-D-glucosamine-binding positions include 11–14 (LAAG), Lys25, Gln76, 81–82 (GT), 103–105 (YGD), Gly140, Glu154, Asn169, and Asn227. Asp105 contributes to the Mg(2+) binding site. A Mg(2+)-binding site is contributed by Asn227. The segment at 230 to 250 (LQLSALERAYQQQQAQRLLLA) is linker. The N-acetyltransferase stretch occupies residues 251-456 (GVMLTDPARF…SGWERPVKKK (206 aa)). Arg333 and Lys351 together coordinate UDP-N-acetyl-alpha-D-glucosamine. His363 functions as the Proton acceptor in the catalytic mechanism. Tyr366 and Asn377 together coordinate UDP-N-acetyl-alpha-D-glucosamine. Residues Ala380, 386–387 (NY), Ser405, Ala423, and Arg440 each bind acetyl-CoA.

This sequence in the N-terminal section; belongs to the N-acetylglucosamine-1-phosphate uridyltransferase family. The protein in the C-terminal section; belongs to the transferase hexapeptide repeat family. Homotrimer. Mg(2+) serves as cofactor.

It is found in the cytoplasm. The enzyme catalyses alpha-D-glucosamine 1-phosphate + acetyl-CoA = N-acetyl-alpha-D-glucosamine 1-phosphate + CoA + H(+). The catalysed reaction is N-acetyl-alpha-D-glucosamine 1-phosphate + UTP + H(+) = UDP-N-acetyl-alpha-D-glucosamine + diphosphate. It functions in the pathway nucleotide-sugar biosynthesis; UDP-N-acetyl-alpha-D-glucosamine biosynthesis; N-acetyl-alpha-D-glucosamine 1-phosphate from alpha-D-glucosamine 6-phosphate (route II): step 2/2. The protein operates within nucleotide-sugar biosynthesis; UDP-N-acetyl-alpha-D-glucosamine biosynthesis; UDP-N-acetyl-alpha-D-glucosamine from N-acetyl-alpha-D-glucosamine 1-phosphate: step 1/1. Its pathway is bacterial outer membrane biogenesis; LPS lipid A biosynthesis. Catalyzes the last two sequential reactions in the de novo biosynthetic pathway for UDP-N-acetylglucosamine (UDP-GlcNAc). The C-terminal domain catalyzes the transfer of acetyl group from acetyl coenzyme A to glucosamine-1-phosphate (GlcN-1-P) to produce N-acetylglucosamine-1-phosphate (GlcNAc-1-P), which is converted into UDP-GlcNAc by the transfer of uridine 5-monophosphate (from uridine 5-triphosphate), a reaction catalyzed by the N-terminal domain. The protein is Bifunctional protein GlmU of Edwardsiella ictaluri (strain 93-146).